The primary structure comprises 176 residues: Large ribosomal subunit protein uL10 (176 aa).

This sequence belongs to the universal ribosomal protein uL10 family. As to quaternary structure, part of the ribosomal stalk of the 50S ribosomal subunit. The N-terminus interacts with L11 and the large rRNA to form the base of the stalk. The C-terminus forms an elongated spine to which L12 dimers bind in a sequential fashion forming a multimeric L10(L12)X complex.

Functionally, forms part of the ribosomal stalk, playing a central role in the interaction of the ribosome with GTP-bound translation factors. The polypeptide is Large ribosomal subunit protein uL10 (Mycobacteroides abscessus (strain ATCC 19977 / DSM 44196 / CCUG 20993 / CIP 104536 / JCM 13569 / NCTC 13031 / TMC 1543 / L948) (Mycobacterium abscessus)).